The following is a 210-amino-acid chain: Syntaxin-binding protein 6 (210 aa).

The residue at position 2 (Ser2) is an N-acetylserine. One can recognise a v-SNARE coiled-coil homology domain in the interval Gly151–Cys210.

Part of a ternary complex containing SNAP25 and STX1A that can be dissociated by NAPA and NSF. Interacts with STX4A. In terms of tissue distribution, detected at low levels in brain, and at very low levels in heart, adrenal gland, testis, liver and kidney.

The protein localises to the cytoplasm. It is found in the membrane. Its function is as follows. Forms non-fusogenic complexes with SNAP25 and STX1A and may thereby modulate the formation of functional SNARE complexes and exocytosis. In Homo sapiens (Human), this protein is Syntaxin-binding protein 6 (STXBP6).